A 201-amino-acid polypeptide reads, in one-letter code: Adenylyl-sulfate kinase (201 aa).

Position 35–42 (35–42) interacts with ATP; it reads GLSGSGKS. The active-site Phosphoserine intermediate is S109.

This sequence belongs to the APS kinase family.

The catalysed reaction is adenosine 5'-phosphosulfate + ATP = 3'-phosphoadenylyl sulfate + ADP + H(+). It participates in sulfur metabolism; hydrogen sulfide biosynthesis; sulfite from sulfate: step 2/3. In terms of biological role, catalyzes the synthesis of activated sulfate. The chain is Adenylyl-sulfate kinase from Klebsiella pneumoniae (strain 342).